Here is a 127-residue protein sequence, read N- to C-terminus: Alkaline proteinase inhibitor (127 aa).

The N-terminal stretch at 1–26 (MNINYFVRIVPVAVVLLVGISGASMA) is a signal peptide. The cysteines at positions 53 and 70 are disulfide-linked.

Belongs to the protease inhibitor I38 family.

It is found in the periplasm. Functionally, inhibitor of the alkaline protease. The chain is Alkaline proteinase inhibitor (inh) from Pseudomonas syringae pv. tomato (strain ATCC BAA-871 / DC3000).